The following is a 243-amino-acid chain: MNSQQDTIYAHVTDQITDFQFDQRVAGVFNDMIRRSVPGYAQIINTIGDFANRFVTPQSNIYDLGSSLGSATLSIRRQIEGRGCQIYAVDNSQSMIERCTENLAAYVSDIKVNLLCADIRDIDIKNASMVVLNFTLQFLPTHDRDALIKRIYDGMLPGGILVISEKLFFEDNHIQQLLDEQHLDFKRANGYSELEISQKRSALENVMRPDSLNVHQQRLTENGFSHFSVWFQCFNFASMVAIK.

S-adenosyl-L-methionine-binding positions include tyrosine 40, 65–67 (GSS), 90–91 (DN), 118–119 (DI), asparagine 133, and arginine 200.

It belongs to the class I-like SAM-binding methyltransferase superfamily. Cx-SAM synthase family. In terms of assembly, homodimer.

The enzyme catalyses prephenate + S-adenosyl-L-methionine = carboxy-S-adenosyl-L-methionine + 3-phenylpyruvate + H2O. Catalyzes the conversion of S-adenosyl-L-methionine (SAM) to carboxy-S-adenosyl-L-methionine (Cx-SAM). The polypeptide is Carboxy-S-adenosyl-L-methionine synthase (Shewanella frigidimarina (strain NCIMB 400)).